Here is a 310-residue protein sequence, read N- to C-terminus: Olfactory receptor 5H14 (310 aa).

Topologically, residues methionine 1–phenylalanine 28 are extracellular. Residue asparagine 5 is glycosylated (N-linked (GlcNAc...) asparagine). The helical transmembrane segment at leucine 29–isoleucine 49 threads the bilayer. The Cytoplasmic portion of the chain corresponds to tryptophan 50–histidine 56. Residues isoleucine 57 to valine 77 form a helical membrane-spanning segment. Residues threonine 78–lysine 98 are Extracellular-facing. A disulfide bond links cysteine 97 and cysteine 179. A helical transmembrane segment spans residues isoleucine 99 to alanine 119. At tyrosine 120–arginine 143 the chain is on the cytoplasmic side. Residues leucine 144–phenylalanine 164 form a helical membrane-spanning segment. Residues arginine 165 to asparagine 195 lie on the Extracellular side of the membrane. A helical transmembrane segment spans residues phenylalanine 196 to isoleucine 216. Residues serine 217–threonine 240 are Cytoplasmic-facing. Residues cysteine 241–glycine 261 form a helical membrane-spanning segment. Topologically, residues serine 262–aspartate 271 are extracellular. A helical transmembrane segment spans residues methionine 272–leucine 292. At arginine 293 to valine 310 the chain is on the cytoplasmic side.

This sequence belongs to the G-protein coupled receptor 1 family.

It is found in the cell membrane. Odorant receptor. This is Olfactory receptor 5H14 (OR5H14) from Homo sapiens (Human).